The chain runs to 70 residues: Large ribosomal subunit protein bL32 (70 aa).

Residues 1–19 (MAVPKRKTTPSRRGMRRSH) are compositionally biased toward basic residues. Residues 1–21 (MAVPKRKTTPSRRGMRRSHQA) form a disordered region.

Belongs to the bacterial ribosomal protein bL32 family.

The polypeptide is Large ribosomal subunit protein bL32 (Gluconobacter oxydans (strain 621H) (Gluconobacter suboxydans)).